We begin with the raw amino-acid sequence, 187 residues long: Elongation factor P (187 aa).

The protein belongs to the elongation factor P family.

Its subcellular location is the cytoplasm. It functions in the pathway protein biosynthesis; polypeptide chain elongation. Its function is as follows. Involved in peptide bond synthesis. Stimulates efficient translation and peptide-bond synthesis on native or reconstituted 70S ribosomes in vitro. Probably functions indirectly by altering the affinity of the ribosome for aminoacyl-tRNA, thus increasing their reactivity as acceptors for peptidyl transferase. This is Elongation factor P from Magnetococcus marinus (strain ATCC BAA-1437 / JCM 17883 / MC-1).